The sequence spans 202 residues: Putative 3-methyladenine DNA glycosylase (202 aa).

It belongs to the DNA glycosylase MPG family.

The protein is Putative 3-methyladenine DNA glycosylase of Staphylococcus aureus (strain bovine RF122 / ET3-1).